We begin with the raw amino-acid sequence, 213 residues long: StAR-related lipid transfer protein 5 (213 aa).

An START domain is found at 1 to 213 (MDPALAAQMS…LQKAVKQFHE (213 aa)).

May be involved in the intracellular transport of sterols or other lipids. May bind cholesterol or other sterols. The protein is StAR-related lipid transfer protein 5 (STARD5) of Pongo abelii (Sumatran orangutan).